The chain runs to 224 residues: Peroxiredoxin-6 (224 aa).

The Thioredoxin domain occupies L5 to L169. The interval D31–P40 is required and sufficient for targeting to lysosomes and lamellar bodies. The residue at position 44 (T44) is a Phosphothreonine. C47 serves as the catalytic Cysteine sulfenic acid (-SOH) intermediate; for peroxidase activity. Residue K63 is modified to N6-acetyllysine. Y89 carries the post-translational modification Phosphotyrosine. The active-site For phospholipase activity is the D140. Phosphothreonine; by MAPK is present on T177. The residue at position 209 (K209) is an N6-acetyllysine; alternate. Residue K209 is modified to N6-succinyllysine; alternate.

This sequence belongs to the peroxiredoxin family. Prx6 subfamily. In terms of assembly, homodimer. Interacts with GSTP1; mediates PRDX6 glutathionylation and regeneration. Interacts with APEX1. Interacts with STH. May interact with FAM168B. May interact with HTR2A. In terms of processing, irreversibly inactivated by overoxidation of Cys-47 to sulfinic acid (Cys-SO(2)H) and sulfonic acid (Cys-SO(3)H) forms upon oxidative stress. Post-translationally, phosphorylation at Thr-177 by MAP kinases increases the phospholipase activity of the enzyme. The phosphorylated form exhibits a greater lysophosphatidylcholine acyltransferase activity compared to the non-phosphorylated form.

It is found in the cytoplasm. It localises to the lysosome. The enzyme catalyses a hydroperoxide + 2 glutathione = an alcohol + glutathione disulfide + H2O. It catalyses the reaction a 1,2-diacyl-sn-glycero-3-phosphocholine + H2O = a 1-acyl-sn-glycero-3-phosphocholine + a fatty acid + H(+). The catalysed reaction is a 1-acyl-sn-glycero-3-phosphocholine + an acyl-CoA = a 1,2-diacyl-sn-glycero-3-phosphocholine + CoA. It carries out the reaction 1-hexadecanoyl-sn-glycero-3-phosphocholine + hexadecanoyl-CoA = 1,2-dihexadecanoyl-sn-glycero-3-phosphocholine + CoA. The enzyme catalyses 1,2-dihexadecanoyl-sn-glycero-3-phosphocholine + H2O = 1-hexadecanoyl-sn-glycero-3-phosphocholine + hexadecanoate + H(+). MJ33 or lithium;[(2R)-1-hexadecoxy-3-(2,2,2-trifluoroethoxy)propan-2-yl] methyl phosphate inhibits its phospholipase A2 activity. CI-976 or 2,2-Dimethyl-N-(2,4,6-trimethoxyphenyl)dodecanamide inhibits its lysophosphatidylcholine acyltransferase activity. Functionally, thiol-specific peroxidase that catalyzes the reduction of hydrogen peroxide and organic hydroperoxides to water and alcohols, respectively. Can reduce H(2)O(2) and short chain organic, fatty acid, and phospholipid hydroperoxides. Also has phospholipase activity, can therefore either reduce the oxidized sn-2 fatty acyl group of phospholipids (peroxidase activity) or hydrolyze the sn-2 ester bond of phospholipids (phospholipase activity). These activities are dependent on binding to phospholipids at acidic pH and to oxidized phospholipds at cytosolic pH. Plays a role in cell protection against oxidative stress by detoxifying peroxides and in phospholipid homeostasis. Exhibits acyl-CoA-dependent lysophospholipid acyltransferase which mediates the conversion of lysophosphatidylcholine (1-acyl-sn-glycero-3-phosphocholine or LPC) into phosphatidylcholine (1,2-diacyl-sn-glycero-3-phosphocholine or PC). Shows a clear preference for LPC as the lysophospholipid and for palmitoyl CoA as the fatty acyl substrate. In Homo sapiens (Human), this protein is Peroxiredoxin-6 (PRDX6).